The primary structure comprises 310 residues: tRNA dimethylallyltransferase (310 aa).

Residue 12 to 19 (GPTATGKT) coordinates ATP. 14-19 (TATGKT) serves as a coordination point for substrate. An interaction with substrate tRNA region spans residues 37-40 (DSMM).

It belongs to the IPP transferase family. Monomer. The cofactor is Mg(2+).

It carries out the reaction adenosine(37) in tRNA + dimethylallyl diphosphate = N(6)-dimethylallyladenosine(37) in tRNA + diphosphate. Its function is as follows. Catalyzes the transfer of a dimethylallyl group onto the adenine at position 37 in tRNAs that read codons beginning with uridine, leading to the formation of N6-(dimethylallyl)adenosine (i(6)A). This is tRNA dimethylallyltransferase from Desulforudis audaxviator (strain MP104C).